A 94-amino-acid chain; its full sequence is Large ribosomal subunit protein bL27 (94 aa).

The interval 1–25 (MAHKKGTGSTRNGRDSQSKRLGVKR) is disordered.

Belongs to the bacterial ribosomal protein bL27 family.

The protein is Large ribosomal subunit protein bL27 of Gloeothece citriformis (strain PCC 7424) (Cyanothece sp. (strain PCC 7424)).